A 342-amino-acid chain; its full sequence is Anthranilate phosphoribosyltransferase (342 aa).

5-phospho-alpha-D-ribose 1-diphosphate is bound by residues Gly84, 87-88, Thr92, 94-97, 112-120, and Ser124; these read GD, NIST, and KHGGRSVSS. Gly84 is a binding site for anthranilate. Ser96 is a binding site for Mg(2+). Arg170 contributes to the anthranilate binding site. Positions 229 and 230 each coordinate Mg(2+).

It belongs to the anthranilate phosphoribosyltransferase family. As to quaternary structure, homodimer. Mg(2+) serves as cofactor.

The catalysed reaction is N-(5-phospho-beta-D-ribosyl)anthranilate + diphosphate = 5-phospho-alpha-D-ribose 1-diphosphate + anthranilate. It functions in the pathway amino-acid biosynthesis; L-tryptophan biosynthesis; L-tryptophan from chorismate: step 2/5. Functionally, catalyzes the transfer of the phosphoribosyl group of 5-phosphorylribose-1-pyrophosphate (PRPP) to anthranilate to yield N-(5'-phosphoribosyl)-anthranilate (PRA). The protein is Anthranilate phosphoribosyltransferase of Verminephrobacter eiseniae (strain EF01-2).